A 219-amino-acid chain; its full sequence is tRNA (guanine-N(7)-)-methyltransferase (219 aa).

4 residues coordinate S-adenosyl-L-methionine: glutamate 43, aspartate 68, glutamate 101, and asparagine 124. Substrate contacts are provided by lysine 128 and aspartate 160.

The protein belongs to the class I-like SAM-binding methyltransferase superfamily. TrmB family.

It carries out the reaction guanosine(46) in tRNA + S-adenosyl-L-methionine = N(7)-methylguanosine(46) in tRNA + S-adenosyl-L-homocysteine. It participates in tRNA modification; N(7)-methylguanine-tRNA biosynthesis. Catalyzes the formation of N(7)-methylguanine at position 46 (m7G46) in tRNA. The chain is tRNA (guanine-N(7)-)-methyltransferase from Clostridium botulinum (strain Alaska E43 / Type E3).